The chain runs to 387 residues: Large ribosomal subunit protein uL3 (387 aa).

The residue at position 24 (S24) is a Phosphoserine. K39 is covalently cross-linked (Glycyl lysine isopeptide (Lys-Gly) (interchain with G-Cter in ubiquitin)). T103 bears the Phosphothreonine mark. Residue K136 forms a Glycyl lysine isopeptide (Lys-Gly) (interchain with G-Cter in ubiquitin) linkage. Phosphoserine is present on S156. H243 bears the Pros-methylhistidine mark. S297 is modified (phosphoserine).

This sequence belongs to the universal ribosomal protein uL3 family. Component of the large ribosomal subunit (LSU). Mature yeast ribosomes consist of a small (40S) and a large (60S) subunit. The 40S small subunit contains 1 molecule of ribosomal RNA (18S rRNA) and 33 different proteins (encoded by 57 genes). The large 60S subunit contains 3 rRNA molecules (25S, 5.8S and 5S rRNA) and 46 different proteins (encoded by 81 genes). uL3 forms together with ES39L one of the contact sites for the signal recognition particle that targets ribosomes to the endoplasmic reticulum membrane. In terms of processing, methylation at His-243 by HPM1 is required for proper 60S subunit assembly and promotes translational elongation fidelity.

Its subcellular location is the cytoplasm. Component of the ribosome, a large ribonucleoprotein complex responsible for the synthesis of proteins in the cell. The small ribosomal subunit (SSU) binds messenger RNAs (mRNAs) and translates the encoded message by selecting cognate aminoacyl-transfer RNA (tRNA) molecules. The large subunit (LSU) contains the ribosomal catalytic site termed the peptidyl transferase center (PTC), which catalyzes the formation of peptide bonds, thereby polymerizing the amino acids delivered by tRNAs into a polypeptide chain. The nascent polypeptides leave the ribosome through a tunnel in the LSU and interact with protein factors that function in enzymatic processing, targeting, and the membrane insertion of nascent chains at the exit of the ribosomal tunnel. uL3 plays a role in coordinating processes of accommodating the aminoacyl-tRNA in the PTC. This is Large ribosomal subunit protein uL3 from Saccharomyces cerevisiae (strain ATCC 204508 / S288c) (Baker's yeast).